The following is a 95-amino-acid chain: Secretoglobin family 2A member 1 (95 aa).

The signal sequence occupies residues M1–A18. N-linked (GlcNAc...) asparagine glycosylation is found at N35 and N72.

This sequence belongs to the secretoglobin family. Lipophilin subfamily. As to quaternary structure, prostatein is composed of three different peptides called C1, C2 and C3. These form covalent C1:C3 (F) and C2:C3 (S) heterodimers whose non-covalent association forms tetrameric (C1:C3/C3:C2) prostatein molecules. In terms of tissue distribution, expressed at very low level in ventral prostate.

The protein localises to the secreted. Its function is as follows. Part of prostatein which is the major secretory glycoprotein of ventral prostate gland. Steroid-binding protein; can bind non-polar steroids, cholesterol and a group of small proline-rich peptides. This is Secretoglobin family 2A member 1 from Rattus norvegicus (Rat).